A 540-amino-acid chain; its full sequence is Glucose-6-phosphate isomerase (540 aa).

Residue glutamate 350 is the Proton donor of the active site. Catalysis depends on residues histidine 381 and lysine 503.

Belongs to the GPI family.

It is found in the cytoplasm. The enzyme catalyses alpha-D-glucose 6-phosphate = beta-D-fructose 6-phosphate. The protein operates within carbohydrate biosynthesis; gluconeogenesis. Its pathway is carbohydrate degradation; glycolysis; D-glyceraldehyde 3-phosphate and glycerone phosphate from D-glucose: step 2/4. In terms of biological role, catalyzes the reversible isomerization of glucose-6-phosphate to fructose-6-phosphate. This is Glucose-6-phosphate isomerase from Burkholderia pseudomallei (strain 1710b).